We begin with the raw amino-acid sequence, 142 residues long: Large ribosomal subunit protein uL22c (142 aa).

Belongs to the universal ribosomal protein uL22 family. Part of the 50S ribosomal subunit.

The protein localises to the plastid. Its subcellular location is the chloroplast. Functionally, this protein binds specifically to 23S rRNA. The globular domain of the protein is located near the polypeptide exit tunnel on the outside of the subunit, while an extended beta-hairpin is found that lines the wall of the exit tunnel in the center of the 70S ribosome. The protein is Large ribosomal subunit protein uL22c (rpl22) of Oenothera parviflora (Small-flowered evening primrose).